A 2475-amino-acid polypeptide reads, in one-letter code: Polyprotein pp220 (2475 aa).

Residue Gly2 is the site of N-myristoyl glycine; by host attachment. Residues 2184 to 2211 (RNQIIGELNAFRTQLEDTRREVNNLIQT) adopt a coiled-coil conformation.

This sequence belongs to the asfivirus polyprotein pp220 family. Post-translationally, specific enzymatic cleavages in vivo by the viral pS273R protease yield mature proteins.

It localises to the host cytoplasm. It is found in the host perinuclear region. The protein resides in the virion. The protein localises to the host nucleus. Essential for the core assembly. Its myristoyl moiety may function as a membrane-anchoring signal to bind the developing core shell to the inner viral envelope. In terms of biological role, the structural protein p34 is a component of the virus core shell. Functionally, the structural protein p14 is a component of the virus core shell. Its function is as follows. The structural protein p37 is a component of the virus core shell. The structural protein p150 is a component of the virus core shell. The sequence is that of Polyprotein pp220 from African swine fever virus (isolate Tick/South Africa/Pretoriuskop Pr4/1996) (ASFV).